The following is a 76-amino-acid chain: uncharacterized protein (76 aa).

In terms of domain architecture, HTH cro/C1-type spans 6–60 (LKKNRLEKGFTQEEVAKAAQIGRAYYTMIENGTRKPSVIVSKKIGEKLGFDWTIF). Residues 17-36 (QEEVAKAAQIGRAYYTMIEN) constitute a DNA-binding region (H-T-H motif).

This is an uncharacterized protein from Bacillus subtilis (strain 168).